A 484-amino-acid chain; its full sequence is Endoglucanase 3 (484 aa).

An N-terminal signal peptide occupies residues 1 to 21 (MASPFFFVFLLSALSLENTYA). Asp-77 functions as the Nucleophile in the catalytic mechanism. Asn-370 is a glycosylation site (N-linked (GlcNAc...) asparagine). Catalysis depends on residues His-402, Asp-453, and Glu-462.

This sequence belongs to the glycosyl hydrolase 9 (cellulase E) family. As to expression, specifically expressed in root cap cells.

The protein resides in the secreted. The catalysed reaction is Endohydrolysis of (1-&gt;4)-beta-D-glucosidic linkages in cellulose, lichenin and cereal beta-D-glucans.. May be involved in the sloughing (cell-cell separation) of the root cap cells from root tip. This is Endoglucanase 3 (CEL5) from Arabidopsis thaliana (Mouse-ear cress).